Consider the following 108-residue polypeptide: UPF0235 protein RB8260 (108 aa).

It belongs to the UPF0235 family.

The polypeptide is UPF0235 protein RB8260 (Rhodopirellula baltica (strain DSM 10527 / NCIMB 13988 / SH1)).